The chain runs to 122 residues: Large ribosomal subunit protein uL14 (122 aa).

This sequence belongs to the universal ribosomal protein uL14 family. Part of the 50S ribosomal subunit. Forms a cluster with proteins L3 and L19. In the 70S ribosome, L14 and L19 interact and together make contacts with the 16S rRNA in bridges B5 and B8.

Binds to 23S rRNA. Forms part of two intersubunit bridges in the 70S ribosome. The polypeptide is Large ribosomal subunit protein uL14 (Helicobacter pylori (strain J99 / ATCC 700824) (Campylobacter pylori J99)).